The sequence spans 286 residues: Probable endonuclease LCL3 (286 aa).

A disordered region spans residues 1–29 (MSGSYSPQKDPQHPTQHQQFPPTPPYPSS). Residues 41–61 (VFIGIGSAAGASALTLLGVMG) traverse the membrane as a helical segment. The 160-residue stretch at 84 to 243 (AWIKGIVTSV…RDAKRGLWAL (160 aa)) folds into the TNase-like domain. Arg133 is a catalytic residue. Asp138 provides a ligand contact to Ca(2+). Active-site residues include Glu141 and Arg181.

Belongs to the LCL3 family.

The protein resides in the mitochondrion. It localises to the membrane. This Cryptococcus gattii serotype B (strain WM276 / ATCC MYA-4071) (Filobasidiella gattii) protein is Probable endonuclease LCL3 (LCL3).